Reading from the N-terminus, the 1007-residue chain is Kinesin-like protein KIN-7D, chloroplastic (1007 aa).

The N-terminal 53 residues, 1–53, are a transit peptide targeting the chloroplast; sequence MATRPASRQRRASSAAAAVAVVRSSPQPQQQQQQQLPIPQSGSPTSTTTTTTS. Positions 1 to 55 are enriched in low complexity; the sequence is MATRPASRQRRASSAAAAVAVVRSSPQPQQQQQQQLPIPQSGSPTSTTTTTTSSS. Residues 1-79 form a disordered region; the sequence is MATRPASRQR…LFAGLDEDPA (79 aa). A Kinesin motor domain is found at 83 to 402; sequence NVTVTVRFRP…LKFAHRAKRI (320 aa). 163 to 170 serves as a coordination point for ATP; sequence GVTSSGKT. Positions 403 to 495 form a coiled coil; that stretch reads EVQASQNKII…QRLTKLILVS (93 aa). The segment at 579 to 607 is disordered; it reads ILTSSEGDKSSLTKSTAPSTPIGESVNFP. Coiled-coil stretches lie at residues 687–716, 754–791, and 836–907; these read NNEKIQMEMKKVNDEIKGKKHQIASLERQI, AADNRVIQDQLNEKTTECMELQEEVAHLKEQLYQTLQA, and SVEI…SVRS. Residues 901–941 are disordered; the sequence is ELASVRSPTPRRANSGLRGTRRDSISRRHEPAPRRDNNAGY. The segment covering 920–941 has biased composition (basic and acidic residues); the sequence is TRRDSISRRHEPAPRRDNNAGY. Residues 942 to 982 are a coiled coil; the sequence is EREKALEAVLMEKEQKEAELQRRIEESKQKEAFLESELANM.

It belongs to the TRAFAC class myosin-kinesin ATPase superfamily. Kinesin family. KIN-7 subfamily. As to quaternary structure, binds microtubules. Homodimer. Mg(2+) serves as cofactor.

It is found in the plastid. The protein resides in the chloroplast. Its function is as follows. Probable minus end-directed motor protein with a microtubule-enhanced ATPase activity. Binds ATP/ADP in vitro. Retains total enzymatic activity even after the removal of the ADP bound in the active site. This chain is Kinesin-like protein KIN-7D, chloroplastic, found in Oryza sativa subsp. japonica (Rice).